The primary structure comprises 159 residues: Succinate dehydrogenase [ubiquinone] cytochrome b small subunit, mitochondrial (159 aa).

The N-terminal 56 residues, 1 to 56, are a transit peptide targeting the mitochondrion; that stretch reads MAVLLKLGVLCSGQGARALSLRSRAVRPAFVSAFLQDQPTPGWRGTQHIHLSPSHQ. Over 57-63 the chain is Mitochondrial matrix; sequence SGSKAAS. Residues 64–85 traverse the membrane as a helical segment; the sequence is LHWTSERVVSVLLLGLIPAGYL. Over 86–90 the chain is Mitochondrial intermembrane; that stretch reads NPCSV. Residues 91-111 form a helical membrane-spanning segment; sequence VDYSLAAALTLHSHWGIGQVV. Histidine 102 contacts heme b. Residues 112 to 120 lie on the Mitochondrial matrix side of the membrane; the sequence is TDYVHGDAL. Tyrosine 114 provides a ligand contact to a ubiquinone. A helical membrane pass occupies residues 121–142; it reads QKATKAGLLAVSALTFAGLCYF. Residues 143–159 are Mitochondrial intermembrane-facing; it reads NYHDVGICRAVAMLWKL.

The protein belongs to the CybS family. In terms of assembly, component of complex II composed of four subunits: the flavoprotein (FP) SDHA, iron-sulfur protein (IP) SDHB, and a cytochrome b560 composed of SDHC and SDHD.

The protein localises to the mitochondrion inner membrane. The protein operates within carbohydrate metabolism; tricarboxylic acid cycle. Functionally, membrane-anchoring subunit of succinate dehydrogenase (SDH) that is involved in complex II of the mitochondrial electron transport chain and is responsible for transferring electrons from succinate to ubiquinone (coenzyme Q). SDH also oxidizes malate to the non-canonical enol form of oxaloacetate, enol-oxaloacetate. Enol-oxaloacetate, which is a potent inhibitor of the succinate dehydrogenase activity, is further isomerized into keto-oxaloacetate. The chain is Succinate dehydrogenase [ubiquinone] cytochrome b small subunit, mitochondrial (Sdhd) from Rattus norvegicus (Rat).